A 353-amino-acid chain; its full sequence is tRNA pseudouridine synthase B (353 aa).

D39 (nucleophile) is an active-site residue.

It belongs to the pseudouridine synthase TruB family. Type 1 subfamily.

The catalysed reaction is uridine(55) in tRNA = pseudouridine(55) in tRNA. In terms of biological role, responsible for synthesis of pseudouridine from uracil-55 in the psi GC loop of transfer RNAs. This Wolbachia pipientis subsp. Culex pipiens (strain wPip) protein is tRNA pseudouridine synthase B.